Reading from the N-terminus, the 275-residue chain is Bis(5'-nucleosyl)-tetraphosphatase, symmetrical (275 aa).

This sequence belongs to the Ap4A hydrolase family.

The catalysed reaction is P(1),P(4)-bis(5'-adenosyl) tetraphosphate + H2O = 2 ADP + 2 H(+). In terms of biological role, hydrolyzes diadenosine 5',5'''-P1,P4-tetraphosphate to yield ADP. This chain is Bis(5'-nucleosyl)-tetraphosphatase, symmetrical, found in Haemophilus influenzae (strain PittEE).